We begin with the raw amino-acid sequence, 711 residues long: Putative membrane protein ActII-3 (711 aa).

The next 12 helical transmembrane spans lie at 14-34 (LKWLVLAAWIGLLIVLQPLAG), 175-195 (ADFKLTLVTLLIVVTILVVTY), 199-219 (LLWLLPMISAGMSLVISQAIV), 235-255 (AMILTVLVLGAATDYALLLVA), 281-301 (AIVASAATVAVSMLVLLLAAL), 313-333 (VGVLVGLLSMMTLLPALLVIF), 369-389 (AVWVTTSLLLGAVATLAVTLN), 516-536 (IIPVILAVVFCILALLLRALV), 540-560 (LLIASVVLSFFTALGLAALFF), 573-593 (FPLWVFVFLVALGVDYNIFLV), 623-643 (AGLVLAGTFAALATLPLVFIA), and 645-665 (LGFTVAVGVLLDTMIVRSVLV). Residues 685-711 (REDPSEDPAVSGMPDSIDSEASTTASR) are disordered.

The protein belongs to the resistance-nodulation-cell division (RND) (TC 2.A.6) family. MmpL subfamily.

Its subcellular location is the cell membrane. The chain is Putative membrane protein ActII-3 (actII-3) from Streptomyces coelicolor (strain ATCC BAA-471 / A3(2) / M145).